We begin with the raw amino-acid sequence, 385 residues long: MSLILNILREMLEYFGVPVEQVLLIWENKDYGSTRSIVRIIGKMLPLEPCRRPNFELIPLLNSVDSDNCGSMVPSFADILYVANDEEASYLRFRNSIWKNEEEKVEIFHPLRLVRDPLSPAVRQKETVKNDLPVNEAAIRKIAALENELTFLRSQIAAIVEMQELKNSTNSSSFGLSDERISLGQLSSSRAAHLSVDPDQLPGSVLSPPPPPPLPPQFSSLQPPCFPPVQPGSNNICDSDNPATEMSKQNPAANKTNYSHHSKSQRNKDIPNMLDVLKDMNKVKLRAIERSPGGRPIHKRKRQNSHWDPVSLISHALKQKFAFQEDDSFEKENRSWESSPFSSPETSRFGHHISQSEGQRTKEEMVNTKAVDQGISNTSLLNSRI.

Ser2 is subject to N-acetylserine. Ser119 bears the Phosphoserine mark. Positions 195-268 (SVDPDQLPGS…SHHSKSQRNK (74 aa)) are disordered. The segment covering 207–216 (SPPPPPPLPP) has biased composition (pro residues). A compositionally biased stretch (polar residues) spans 231-257 (PGSNNICDSDNPATEMSKQNPAANKTN). Residues Ser291 and Ser328 each carry the phosphoserine modification. The segment at 331–363 (KENRSWESSPFSSPETSRFGHHISQSEGQRTKE) is disordered. Positions 336–346 (WESSPFSSPET) are enriched in polar residues.

It belongs to the MTFR1 family.

The protein resides in the mitochondrion. May play a role in mitochondrial aerobic respiration essentially in the testis. Can also promote mitochondrial fission. This chain is Mitochondrial fission regulator 2 (MTFR2), found in Homo sapiens (Human).